A 379-amino-acid chain; its full sequence is Cytochrome b (379 aa).

4 helical membrane-spanning segments follow: residues 33–53 (FGSL…FLAM), 77–98 (WMIR…FIHV), 113–133 (WNVG…GYVL), and 178–198 (FFAL…IHLL). Residues His-83 and His-97 each coordinate heme b. Residues His-182 and His-196 each coordinate heme b. His-201 lines the a ubiquinone pocket. The next 4 helical transmembrane spans lie at 226 to 246 (TKDF…ALFY), 288 to 308 (LGGV…PFLQ), 320 to 340 (LSQF…WIGG), and 347 to 367 (FISI…FIMP).

Belongs to the cytochrome b family. In terms of assembly, the cytochrome bc1 complex contains 11 subunits: 3 respiratory subunits (MT-CYB, CYC1 and UQCRFS1), 2 core proteins (UQCRC1 and UQCRC2) and 6 low-molecular weight proteins (UQCRH/QCR6, UQCRB/QCR7, UQCRQ/QCR8, UQCR10/QCR9, UQCR11/QCR10 and a cleavage product of UQCRFS1). This cytochrome bc1 complex then forms a dimer. Heme b serves as cofactor.

It is found in the mitochondrion inner membrane. Its function is as follows. Component of the ubiquinol-cytochrome c reductase complex (complex III or cytochrome b-c1 complex) that is part of the mitochondrial respiratory chain. The b-c1 complex mediates electron transfer from ubiquinol to cytochrome c. Contributes to the generation of a proton gradient across the mitochondrial membrane that is then used for ATP synthesis. This is Cytochrome b (MT-CYB) from Lepilemur septentrionalis (Northern sportive lemur).